Reading from the N-terminus, the 136-residue chain is Small ribosomal subunit protein bS6 (136 aa).

Over residues 117–130 (EERSRSSRRQREDV) the composition is skewed to basic and acidic residues. A disordered region spans residues 117-136 (EERSRSSRRQREDVIEGVEL).

This sequence belongs to the bacterial ribosomal protein bS6 family.

In terms of biological role, binds together with bS18 to 16S ribosomal RNA. This chain is Small ribosomal subunit protein bS6, found in Bartonella quintana (strain Toulouse) (Rochalimaea quintana).